A 368-amino-acid chain; its full sequence is Glutamate 5-kinase (368 aa).

Residue Lys-9 participates in ATP binding. Substrate is bound by residues Ser-49, Asp-136, and Asn-148. ATP-binding positions include 168 to 169 (TD) and 210 to 216 (TGGMMTK). In terms of domain architecture, PUA spans 275 to 353 (AGIITIDNGA…ADIENVLGYE (79 aa)).

The protein belongs to the glutamate 5-kinase family.

The protein resides in the cytoplasm. It catalyses the reaction L-glutamate + ATP = L-glutamyl 5-phosphate + ADP. Its pathway is amino-acid biosynthesis; L-proline biosynthesis; L-glutamate 5-semialdehyde from L-glutamate: step 1/2. Catalyzes the transfer of a phosphate group to glutamate to form L-glutamate 5-phosphate. This chain is Glutamate 5-kinase, found in Haemophilus influenzae (strain ATCC 51907 / DSM 11121 / KW20 / Rd).